A 477-amino-acid chain; its full sequence is Sensor protein kinase PmrB (477 aa).

2 helical membrane-spanning segments follow: residues 13 to 33 (LLVNLLVGFVLCWLSVAALTY) and 161 to 181 (LLLFYSLFPLLLALPLLGGLV). Positions 186-238 (ARGLAPLREVQAEVQQRSARHLQPIAVEAVPLEIRGLIDELNLLLERLRTALE) constitute an HAMP domain. A Histidine kinase domain is found at 246–459 (DAAHEIRTPL…EVQVFLPKTQ (214 aa)). A Phosphohistidine; by autocatalysis modification is found at His-249. The disordered stretch occupies residues 455–477 (LPKTQPDATRPPARGPDSGRSHI).

It is found in the membrane. It carries out the reaction ATP + protein L-histidine = ADP + protein N-phospho-L-histidine.. Functionally, member of the two-component regulatory system PmrA/PmrB that plays a role in the regulation of resistance towards polymyxin B and cationic antimicrobial peptides in response to limiting concentrations of Mg(2+). Also autoregulates its own pmrAB operon under Mg(2+)-limiting conditions. May function as a membrane-associated protein kinase that phosphorylates PmrA in response to environmental signals leading to activation of specific gene promoters. This Pseudomonas aeruginosa (strain ATCC 15692 / DSM 22644 / CIP 104116 / JCM 14847 / LMG 12228 / 1C / PRS 101 / PAO1) protein is Sensor protein kinase PmrB (pmrB).